Consider the following 292-residue polypeptide: Aquaporin-3 (292 aa).

Residues 1-24 are Cytoplasmic-facing; that stretch reads MGRQKELMNRCGEMLHIRYRLLRQ. Residues 25–42 form a helical membrane-spanning segment; that stretch reads ALAECLGTLILVMFGCGS. Over 43-56 the chain is Extracellular; that stretch reads VAQVVLSRGTHGGF. The helical transmembrane segment at 57 to 74 threads the bilayer; sequence LTINLAFGFAVTLAILVA. Residues 75–78 lie on the Cytoplasmic side of the membrane; it reads GQVS. The discontinuously helical intramembrane region spans 79 to 92; that stretch reads GAHLNPAVTFAMCF. Residues 83 to 85 carry the NPA 1 motif; the sequence is NPA. At 93-100 the chain is on the cytoplasmic side; the sequence is LAREPWIK. The helical transmembrane segment at 101-121 threads the bilayer; sequence LPIYTLAQTLGAFLGAGIVFG. The Extracellular segment spans residues 122 to 159; sequence LYYDAIWAFAGNELVVSGPNGTAGIFATYPSGHLDMVN. An N-linked (GlcNAc...) asparagine glycan is attached at asparagine 141. Residues 160 to 177 form a helical membrane-spanning segment; it reads GFFDQFIGTAALIVCVLA. Residues 178–189 lie on the Cytoplasmic side of the membrane; it reads IVDPYNNPVPRG. Residues 190–206 form a helical membrane-spanning segment; it reads LEAFTVGLVVLVIGTSM. The Extracellular segment spans residues 207–210; sequence GFNS. Positions 211-224 form an intramembrane region, discontinuously helical; the sequence is GYAVNPARDFGPRL. The NPA 2 motif lies at 215–217; the sequence is NPA. Residues 225 to 242 are Extracellular-facing; the sequence is FTALAGWGSEVFTTGQNW. Residues 243-264 traverse the membrane as a helical segment; that stretch reads WWVPIVSPLLGSIGGVFVYQLM. Residues 265–292 lie on the Cytoplasmic side of the membrane; it reads IGCHLEQPPPSTEAENVKLAHMKHKEQI.

Belongs to the MIP/aquaporin (TC 1.A.8) family. In terms of assembly, homotetramer; each monomer provides an independent glycerol/water pore. Could also exist in other oligomeric states. Detected in kidney medulla and papilla, in collecting duct cells. Detected in colon.

It localises to the cell membrane. The protein resides in the basolateral cell membrane. It catalyses the reaction glycerol(in) = glycerol(out). The catalysed reaction is H2O(in) = H2O(out). The enzyme catalyses urea(in) = urea(out). It carries out the reaction H2O2(out) = H2O2(in). Its activity is regulated as follows. Channel activity is inhibited by mercury ions. Aquaglyceroporins form homotetrameric transmembrane channels, with each monomer independently mediating glycerol and water transport across the plasma membrane along their osmotic gradient. Could also be permeable to urea. Also participates in cell permeability to H2O2 and H2O2-mediated signaling. In skin, transports glycerol to the epidermis and stratum corneum, where it maintains hydration, elasticity, and supports lipid biosynthesis for barrier repair. In kidney, contributes to the reabsorption of water, helping the body maintain proper fluid balance. The chain is Aquaporin-3 from Rattus norvegicus (Rat).